The sequence spans 214 residues: GTP-binding nuclear protein GSP1/Ran (214 aa).

One can recognise a Small GTPase Ran-type domain in the interval 4-168 (EVPTFKLVLV…LWLARKLAGN (165 aa)). GTP is bound at residue 15–22 (DGGTGKTT). Residues 34-42 (KKYIATIGV) are switch-I. Residues Gly-65, 119–122 (NKVD), and 147–149 (SAK) contribute to the GTP site. Residues 65-81 (GQEKFGGLRDGYYINAQ) form a switch-II region.

It belongs to the small GTPase superfamily. Ran family. Found in a nuclear export complex with RanGTP, exportin and pre-miRNA.

It is found in the nucleus. GTP-binding protein involved in nucleocytoplasmic transport. Required for the import of protein into the nucleus and also for RNA export. Involved in chromatin condensation and control of cell cycle. This chain is GTP-binding nuclear protein GSP1/Ran (GSP1), found in Candida glabrata (strain ATCC 2001 / BCRC 20586 / JCM 3761 / NBRC 0622 / NRRL Y-65 / CBS 138) (Yeast).